A 210-amino-acid polypeptide reads, in one-letter code: Uridine kinase P10 (210 aa).

Position 10 to 18 (G10 to T18) interacts with ATP. D41 is a catalytic residue.

The protein belongs to the uridine kinase family. In terms of assembly, interacts with host eIF-2B; this interaction disrupts the interaction between eIF2 and eIF-2B, which leads to the inhibition of stress granules formation.

Its subcellular location is the host cytoplasm. It localises to the host perinuclear region. The enzyme catalyses uridine + ATP = UMP + ADP + H(+). Functionally, inhibits the integrated stress response (ISR) in the infected cell by preventing the sequestration of eIF2B by phosphorylated EIF2S1/eIF-2alpha. Stress granule formation in response to EIF2S1/eIF-2alpha phosphorylation is thus inhibited, which allows protein synthesis and viral replication. Phosphorylates uridine to uridine monophosphate. The sequence is that of Uridine kinase P10 (ORF10) from Beluga whale coronavirus (strain SW1) (BwCoV).